A 507-amino-acid chain; its full sequence is MVTIRADEISNIIRERIEQYNREVKIVNTGTVLQVGDGIARIHGLDEVMAGELVEFEEGTIGIALNLESNNVGVVLMGDGLLIQEGSSVKATGRIAQIPVSEAYLGRVINALAKPIDGRGEISASEFRLIESAAPGIISRRSVYEPLQTGLIAIDSMIPIGRGQRELIIGDRQTGKTAVATDTILNQQGQNVICVYVAIGQKASSVAQVVTTLQERGAMEYTIVVAETADSPATLQYLAPYTGAALAEYFMYRERHTLIIYDDPSKQAQAYRQMSLLLRRPPGREAYPGDVFYLHSRLLERAAKLSSSLGEGSMTALPIVETQSGDVSAYIPTNVISITDGQIFLSADLFNSGIRPAINVGISVSRVGSAAQIKAMKQVAGKLKLELAQFAELEAFAQFASDLDKATQNQLARGQRLRELLKQSQSAPLTVEEQIMTIYTGTNGYLDSLEVGQVRKFLVELRTYLKTNKPQFQEIISSTKTFTEEAEALLKEAIQEQMDRFILQEQA.

Residue 170–177 coordinates ATP; the sequence is GDRQTGKT.

This sequence belongs to the ATPase alpha/beta chains family. In terms of assembly, F-type ATPases have 2 components, CF(1) - the catalytic core - and CF(0) - the membrane proton channel. CF(1) has five subunits: alpha(3), beta(3), gamma(1), delta(1), epsilon(1). CF(0) has four main subunits: a, b, b' and c.

The protein localises to the plastid. It localises to the chloroplast thylakoid membrane. The catalysed reaction is ATP + H2O + 4 H(+)(in) = ADP + phosphate + 5 H(+)(out). In terms of biological role, produces ATP from ADP in the presence of a proton gradient across the membrane. The alpha chain is a regulatory subunit. The sequence is that of ATP synthase subunit alpha, chloroplastic from Nicotiana sylvestris (Wood tobacco).